Consider the following 109-residue polypeptide: Nucleoid-associated protein Ldb1634 (109 aa).

Residues 18–40 (MMKQAKKLQEQMAQEQENITTQE) are disordered.

Belongs to the YbaB/EbfC family. As to quaternary structure, homodimer.

It is found in the cytoplasm. The protein localises to the nucleoid. Its function is as follows. Binds to DNA and alters its conformation. May be involved in regulation of gene expression, nucleoid organization and DNA protection. The chain is Nucleoid-associated protein Ldb1634 from Lactobacillus delbrueckii subsp. bulgaricus (strain ATCC 11842 / DSM 20081 / BCRC 10696 / JCM 1002 / NBRC 13953 / NCIMB 11778 / NCTC 12712 / WDCM 00102 / Lb 14).